The sequence spans 240 residues: Purine nucleoside phosphorylase RC0672 (240 aa).

3 residues coordinate Zn(2+): histidine 60, cysteine 96, and histidine 113.

The protein belongs to the purine nucleoside phosphorylase YfiH/LACC1 family. Homodimer. Requires Cu(2+) as cofactor. Zn(2+) is required as a cofactor.

It carries out the reaction adenosine + phosphate = alpha-D-ribose 1-phosphate + adenine. The catalysed reaction is S-methyl-5'-thioadenosine + phosphate = 5-(methylsulfanyl)-alpha-D-ribose 1-phosphate + adenine. It catalyses the reaction inosine + phosphate = alpha-D-ribose 1-phosphate + hypoxanthine. The enzyme catalyses adenosine + H2O + H(+) = inosine + NH4(+). Its function is as follows. Purine nucleoside enzyme that catalyzes the phosphorolysis of adenosine and inosine nucleosides, yielding D-ribose 1-phosphate and the respective free bases, adenine and hypoxanthine. Also catalyzes the phosphorolysis of S-methyl-5'-thioadenosine into adenine and S-methyl-5-thio-alpha-D-ribose 1-phosphate. Also has adenosine deaminase activity. The polypeptide is Purine nucleoside phosphorylase RC0672 (Rickettsia conorii (strain ATCC VR-613 / Malish 7)).